The primary structure comprises 504 residues: Glycerol kinase (504 aa).

Residue threonine 13 coordinates ADP. ATP contacts are provided by threonine 13, threonine 14, and serine 15. Threonine 13 is a binding site for sn-glycerol 3-phosphate. Position 17 (arginine 17) interacts with ADP. Residues arginine 83, glutamate 84, and tyrosine 135 each coordinate sn-glycerol 3-phosphate. The glycerol site is built by arginine 83, glutamate 84, and tyrosine 135. Position 231 is a phosphohistidine; by HPr (histidine 231). Residue aspartate 245 participates in sn-glycerol 3-phosphate binding. Glycerol is bound by residues aspartate 245 and glutamine 246. Threonine 267 and glycine 310 together coordinate ADP. The ATP site is built by threonine 267, glycine 310, glutamine 314, and glycine 411. Positions 411 and 415 each coordinate ADP.

It belongs to the FGGY kinase family. As to quaternary structure, homotetramer and homodimer (in equilibrium). Post-translationally, the phosphoenolpyruvate-dependent sugar phosphotransferase system (PTS), including enzyme I, and histidine-containing protein (HPr) are required for the phosphorylation, which leads to the activation of the enzyme.

The enzyme catalyses glycerol + ATP = sn-glycerol 3-phosphate + ADP + H(+). It functions in the pathway polyol metabolism; glycerol degradation via glycerol kinase pathway; sn-glycerol 3-phosphate from glycerol: step 1/1. With respect to regulation, activated by phosphorylation and inhibited by fructose 1,6-bisphosphate (FBP). Functionally, key enzyme in the regulation of glycerol uptake and metabolism. Catalyzes the phosphorylation of glycerol to yield sn-glycerol 3-phosphate. In Pediococcus pentosaceus (strain ATCC 25745 / CCUG 21536 / LMG 10740 / 183-1w), this protein is Glycerol kinase.